The primary structure comprises 23 residues: Apolipophorin-1 (23 aa).

The segment covering 1 to 15 has biased composition (basic and acidic residues); that stretch reads SVKSEVDNFDKHLKA. The segment at 1-23 is disordered; the sequence is SVKSEVDNFDKHLKAESAPFNNE.

As to expression, expressed in hemolymph.

The protein localises to the secreted. Its function is as follows. Constitutes the major component of lipophorin, which mediates transport for various types of lipids in hemolymph. Acts by forming lipoprotein particles that bind lipoproteins and lipids. The sequence is that of Apolipophorin-1 from Galleria mellonella (Greater wax moth).